Here is a 963-residue protein sequence, read N- to C-terminus: Isoleucine--tRNA ligase (963 aa).

Positions 66–76 (PYANGDIHIGH) match the 'HIGH' region motif. L-isoleucyl-5'-AMP is bound at residue E596. Residues 637 to 641 (KMSKS) carry the 'KMSKS' region motif. K640 lines the ATP pocket. Positions 926, 929, 946, and 949 each coordinate Zn(2+).

It belongs to the class-I aminoacyl-tRNA synthetase family. IleS type 1 subfamily. Monomer. Zn(2+) is required as a cofactor.

It is found in the cytoplasm. It catalyses the reaction tRNA(Ile) + L-isoleucine + ATP = L-isoleucyl-tRNA(Ile) + AMP + diphosphate. Catalyzes the attachment of isoleucine to tRNA(Ile). As IleRS can inadvertently accommodate and process structurally similar amino acids such as valine, to avoid such errors it has two additional distinct tRNA(Ile)-dependent editing activities. One activity is designated as 'pretransfer' editing and involves the hydrolysis of activated Val-AMP. The other activity is designated 'posttransfer' editing and involves deacylation of mischarged Val-tRNA(Ile). In Cupriavidus pinatubonensis (strain JMP 134 / LMG 1197) (Cupriavidus necator (strain JMP 134)), this protein is Isoleucine--tRNA ligase.